We begin with the raw amino-acid sequence, 220 residues long: Chalcone--flavanone isomerase B (220 aa).

Substrate contacts are provided by Thr50, Asn115, and Thr192.

Belongs to the chalcone isomerase family.

It catalyses the reaction a chalcone = a flavanone.. It functions in the pathway secondary metabolite biosynthesis; flavonoid biosynthesis. Functionally, catalyzes the intramolecular cyclization of bicyclic chalcones into tricyclic (S)-flavanones. Responsible for the isomerization of 4,2',4',6'-tetrahydroxychalcone (also termed chalcone) into naringenin. This chain is Chalcone--flavanone isomerase B (CHI2), found in Petunia hybrida (Petunia).